Consider the following 334-residue polypeptide: Baseplate wedge protein gp8 (334 aa).

Residues C142 and C153 are joined by a disulfide bond.

This sequence belongs to the tevenvirinae baseplate structural protein gp8 family. Homodimer. Interacts with gp7. Part of the baseplate macromolecular complex which consists of gp5, gp5.4, gp27 (central spike complex); gp6, gp25, gp53 (inner baseplate); gp7, gp8 (intermediate baseplate); gp9, gp10, gp11, gp12 (peripheral); gp48 and gp54 (proximal region of the tail tube).

It is found in the virion. Intermediate baseplate protein. Involved in the tail assembly. The chain is Baseplate wedge protein gp8 (8) from Enterobacteria phage T4 (Bacteriophage T4).